Consider the following 732-residue polypeptide: X-ray repair cross-complementing protein 5 (732 aa).

One can recognise a VWFA domain in the interval 9-161 (AVVLCVDVGV…CNLKKSGISL (153 aa)). Positions 138 to 165 (LSSPFSQDQLDVIICNLKKSGISLQFFL) are leucine-zipper. Lys195 is covalently cross-linked (Glycyl lysine isopeptide (Lys-Gly) (interchain with G-Cter in SUMO2)). Residues 253-453 (IGPNLSIKIV…CTPTEAQLSA (201 aa)) form the Ku domain. Ser258 is modified (phosphoserine). Lys265 is modified (N6-acetyllysine). The residue at position 318 (Ser318) is a Phosphoserine. Residue Lys332 is modified to N6-acetyllysine. Residues Lys532 and Lys534 each participate in a glycyl lysine isopeptide (Lys-Gly) (interchain with G-Cter in SUMO2) cross-link. Residue Thr535 is modified to Phosphothreonine. Glycyl lysine isopeptide (Lys-Gly) (interchain with G-Cter in SUMO2) cross-links involve residues Lys567 and Lys569. Residues Ser578, Ser580, and Ser581 each carry the phosphoserine; by PRKDC modification. Lys666 carries the N6-acetyllysine modification. Residues Lys670 and Lys689 each participate in a glycyl lysine isopeptide (Lys-Gly) (interchain with G-Cter in SUMO2) cross-link. The disordered stretch occupies residues 708–732 (PKDKAKEDTTGPEEAGDVDDLLDMI). The residue at position 716 (Thr716) is a Phosphothreonine; by PRKDC. A compositionally biased stretch (acidic residues) spans 717 to 732 (TGPEEAGDVDDLLDMI). Positions 720 to 728 (EEAGDVDDL) match the EEXXXDL motif motif.

The protein belongs to the ku80 family. As to quaternary structure, heterodimer composed of XRCC5/Ku80 and XRCC6/Ku70. Component of the core long-range non-homologous end joining (NHEJ) complex (also named DNA-PK complex) composed of PRKDC, LIG4, XRCC4, XRCC6/Ku70, XRCC5/Ku86 and NHEJ1/XLF. Additional component of the NHEJ complex includes PAXX. Following autophosphorylation, PRKDC dissociates from DNA, leading to formation of the short-range NHEJ complex, composed of LIG4, XRCC4, XRCC6/Ku70, XRCC5/Ku86 and NHEJ1/XLF. The XRCC5-XRCC6 dimer also associates with NAA15, and this complex displays DNA binding activity towards the osteocalcin FGF response element (OCFRE). In addition, XRCC5 binds to the osteoblast-specific transcription factors MSX2 and RUNX2. Interacts with ELF3. Interacts with APLF (via KBM motif). The XRCC5/XRCC6 dimer associates in a DNA-dependent manner with APEX1. Identified in a complex with DEAF1 and XRCC6. Interacts with NR4A3; the DNA-dependent protein kinase complex DNA-PK phosphorylates and activates NR4A3 and prevents NR4A3 ubiquitinylation and degradation. Interacts with RNF138. Interacts with CYREN (via KBM motif). Interacts with WRN (via KBM motif). Interacts (via N-terminus) with HSF1 (via N-terminus); this interaction is direct and prevents XRCC5/XRCC6 heterodimeric binding and non-homologous end joining (NHEJ) repair activities induced by ionizing radiation (IR). Interacts with DHX9; this interaction occurs in a RNA-dependent manner. Part of the HDP-RNP complex composed of at least HEXIM1, PRKDC, XRCC5, XRCC6, paraspeckle proteins (SFPQ, NONO, PSPC1, RBM14, and MATR3) and NEAT1 RNA. Interacts with ERCC6. Interacts with ATF7. The XRCC5-XRCC6 dimer associates with ALKBH2. Interacts with TPRN; TPRN interacts with a number of DNA damage response proteins, is recruited to sites of DNA damage and may play a role in DNA damage repair. Interacts with ERCC6L2. In terms of processing, ADP-ribosylated by PARP3. Phosphorylated on serine residues. Phosphorylation by PRKDC may enhance helicase activity. Post-translationally, sumoylated. In terms of processing, ubiquitinated by RNF8 via 'Lys-48'-linked ubiquitination following DNA damage, leading to its degradation and removal from DNA damage sites. Ubiquitinated by RNF138, leading to remove the Ku complex from DNA breaks.

The protein resides in the nucleus. It localises to the nucleolus. Its subcellular location is the chromosome. Single-stranded DNA-dependent ATP-dependent helicase that plays a key role in DNA non-homologous end joining (NHEJ) by recruiting DNA-PK to DNA. Required for double-strand break repair and V(D)J recombination. Also has a role in chromosome translocation. The DNA helicase II complex binds preferentially to fork-like ends of double-stranded DNA in a cell cycle-dependent manner. It works in the 3'-5' direction. During NHEJ, the XRCC5-XRRC6 dimer performs the recognition step: it recognizes and binds to the broken ends of the DNA and protects them from further resection. Binding to DNA may be mediated by XRCC6. The XRCC5-XRRC6 dimer acts as a regulatory subunit of the DNA-dependent protein kinase complex DNA-PK by increasing the affinity of the catalytic subunit PRKDC to DNA by 100-fold. The XRCC5-XRRC6 dimer is probably involved in stabilizing broken DNA ends and bringing them together. The assembly of the DNA-PK complex to DNA ends is required for the NHEJ ligation step. The XRCC5-XRRC6 dimer probably also acts as a 5'-deoxyribose-5-phosphate lyase (5'-dRP lyase), by catalyzing the beta-elimination of the 5' deoxyribose-5-phosphate at an abasic site near double-strand breaks. XRCC5 probably acts as the catalytic subunit of 5'-dRP activity, and allows to 'clean' the termini of abasic sites, a class of nucleotide damage commonly associated with strand breaks, before such broken ends can be joined. The XRCC5-XRRC6 dimer together with APEX1 acts as a negative regulator of transcription. In association with NAA15, the XRCC5-XRRC6 dimer binds to the osteocalcin promoter and activates osteocalcin expression. As part of the DNA-PK complex, involved in the early steps of ribosome assembly by promoting the processing of precursor rRNA into mature 18S rRNA in the small-subunit processome. Binding to U3 small nucleolar RNA, recruits PRKDC and XRCC5/Ku86 to the small-subunit processome. Plays a role in the regulation of DNA virus-mediated innate immune response by assembling into the HDP-RNP complex, a complex that serves as a platform for IRF3 phosphorylation and subsequent innate immune response activation through the cGAS-STING pathway. This chain is X-ray repair cross-complementing protein 5 (Xrcc5), found in Mus musculus (Mouse).